Here is a 191-residue protein sequence, read N- to C-terminus: Protein YceI (191 aa).

Residues 1 to 22 form the signal peptide; sequence MKKSLLGLTFASLMFSAGSAVA.

It belongs to the UPF0312 family. Type 1 subfamily.

Its subcellular location is the periplasm. The sequence is that of Protein YceI from Escherichia coli O6:H1 (strain CFT073 / ATCC 700928 / UPEC).